Reading from the N-terminus, the 316-residue chain is GTP cyclohydrolase FolE2 1 (316 aa).

It belongs to the GTP cyclohydrolase IV family.

It carries out the reaction GTP + H2O = 7,8-dihydroneopterin 3'-triphosphate + formate + H(+). The protein operates within cofactor biosynthesis; 7,8-dihydroneopterin triphosphate biosynthesis; 7,8-dihydroneopterin triphosphate from GTP: step 1/1. In terms of biological role, converts GTP to 7,8-dihydroneopterin triphosphate. This Burkholderia lata (strain ATCC 17760 / DSM 23089 / LMG 22485 / NCIMB 9086 / R18194 / 383) protein is GTP cyclohydrolase FolE2 1.